A 426-amino-acid polypeptide reads, in one-letter code: Glutamate-1-semialdehyde 2,1-aminomutase (426 aa).

Lysine 265 is subject to N6-(pyridoxal phosphate)lysine.

The protein belongs to the class-III pyridoxal-phosphate-dependent aminotransferase family. HemL subfamily. Homodimer. Pyridoxal 5'-phosphate serves as cofactor.

It is found in the cytoplasm. The catalysed reaction is (S)-4-amino-5-oxopentanoate = 5-aminolevulinate. Its pathway is porphyrin-containing compound metabolism; protoporphyrin-IX biosynthesis; 5-aminolevulinate from L-glutamyl-tRNA(Glu): step 2/2. The protein is Glutamate-1-semialdehyde 2,1-aminomutase of Halorhodospira halophila (strain DSM 244 / SL1) (Ectothiorhodospira halophila (strain DSM 244 / SL1)).